The sequence spans 351 residues: Transmembrane protein 185-like (351 aa).

8 helical membrane-spanning segments follow: residues 16-36 (LIYACLLLFSVLLSLRLDGII), 41-61 (WAVFAPIWLWKLMVIIGASVG), 81-101 (FKAMLIAVGIHLLLLTFEVLV), 113-133 (WLLVFMPLFFVSPVSVAACVW), 154-174 (FIFIALKLDGIISWPWLVVCV), 178-198 (ILMSFLCLVVLYYIVWSVLFL), 212-232 (ITMAISWMTIVVPLLTFEILL), and 244-264 (YVPVFVPLWVSLVTLMVTTFG).

The protein belongs to the TMEM185 family.

It localises to the membrane. This is Transmembrane protein 185-like from Danio rerio (Zebrafish).